A 215-amino-acid polypeptide reads, in one-letter code: Pyrrolidone-carboxylate peptidase (215 aa).

Active-site residues include E78, C141, and H165.

Belongs to the peptidase C15 family. As to quaternary structure, homotetramer.

The protein resides in the cytoplasm. It carries out the reaction Release of an N-terminal pyroglutamyl group from a polypeptide, the second amino acid generally not being Pro.. Functionally, removes 5-oxoproline from various penultimate amino acid residues except L-proline. This is Pyrrolidone-carboxylate peptidase from Lacticaseibacillus paracasei (strain ATCC 334 / BCRC 17002 / CCUG 31169 / CIP 107868 / KCTC 3260 / NRRL B-441) (Lactobacillus paracasei).